We begin with the raw amino-acid sequence, 619 residues long: MPWQAFRRFGQKLVRRRTLESGMAETRLARCLSTLDLVALGVGSTLGAGVYVLAGEVAKDKAGPSIVICFLVAALSSVLAGLCYAEFGARVPRSGSAYLYSYVTVGELWAFTTGWNLILSYVIGTASVARAWSSAFDNLIGNHISKTLQGSIALHVPHVLAEYPDFFALGLVLLLTGLLALGASESALVTKVFTGVNLLVLGFVMISGFVKGDVHNWKLTEEDYELAMAELNDTYSLGPLGSGGFVPFGFEGILRGAATCFYAFVGFDCIATTGEEAQNPQRSIPMGIVISLSVCFLAYFAVSSALTLMMPYYQLQPESPLPEAFLYIGWAPARYVVAVGSLCALSTSLLGSMFPMPRVIYAMAEDGLLFRVLARIHTGTRTPIIATVVSGIIAAFMAFLFKLTDLVDLMSIGTLLAYSLVSICVLILRYQPDQETKTGEEVELQEEAITTESEKLTLWGLFFPLNSIPTPLSGQIVYVCSSLLAVLLTALCLVLAQWSVPLLSGDLLWTAVVVLLLLLIIGIIVVIWRQPQSSTPLHFKVPALPLLPLMSIFVNIYLMMQMTAGTWARFGVWMLIGFAIYFGYGIQHSLEEIKSNQPSRKSRAKTVDLDPGTLYVHSV.

Over 1-36 (MPWQAFRRFGQKLVRRRTLESGMAETRLARCLSTLD) the chain is Cytoplasmic. Residues 37–57 (LVALGVGSTLGAGVYVLAGEV) form a helical membrane-spanning segment. The Extracellular portion of the chain corresponds to 58 to 61 (AKDK). The chain crosses the membrane as a helical span at residues 62 to 82 (AGPSIVICFLVAALSSVLAGL). Residues 83–107 (CYAEFGARVPRSGSAYLYSYVTVGE) lie on the Cytoplasmic side of the membrane. The chain crosses the membrane as a helical span at residues 108 to 128 (LWAFTTGWNLILSYVIGTASV). The Extracellular portion of the chain corresponds to 129-162 (ARAWSSAFDNLIGNHISKTLQGSIALHVPHVLAE). The helical transmembrane segment at 163-183 (YPDFFALGLVLLLTGLLALGA) threads the bilayer. Residues 184 to 191 (SESALVTK) lie on the Cytoplasmic side of the membrane. Residues 192 to 212 (VFTGVNLLVLGFVMISGFVKG) traverse the membrane as a helical segment. Residues 213–233 (DVHNWKLTEEDYELAMAELND) lie on the Extracellular side of the membrane. N-linked (GlcNAc...) asparagine glycosylation is present at asparagine 232. Residues 234 to 254 (TYSLGPLGSGGFVPFGFEGIL) form a helical membrane-spanning segment. Topologically, residues 255 to 285 (RGAATCFYAFVGFDCIATTGEEAQNPQRSIP) are cytoplasmic. The chain crosses the membrane as a helical span at residues 286–306 (MGIVISLSVCFLAYFAVSSAL). Residues 307–335 (TLMMPYYQLQPESPLPEAFLYIGWAPARY) are Extracellular-facing. Residues 336-356 (VVAVGSLCALSTSLLGSMFPM) traverse the membrane as a helical segment. The Cytoplasmic segment spans residues 357–382 (PRVIYAMAEDGLLFRVLARIHTGTRT). The chain crosses the membrane as a helical span at residues 383–403 (PIIATVVSGIIAAFMAFLFKL). Over 404 to 406 (TDL) the chain is Extracellular. Residues 407 to 427 (VDLMSIGTLLAYSLVSICVLI) traverse the membrane as a helical segment. Residues 428-475 (LRYQPDQETKTGEEVELQEEAITTESEKLTLWGLFFPLNSIPTPLSGQ) lie on the Cytoplasmic side of the membrane. A helical transmembrane segment spans residues 476–496 (IVYVCSSLLAVLLTALCLVLA). Topologically, residues 497 to 506 (QWSVPLLSGD) are extracellular. The chain crosses the membrane as a helical span at residues 507-527 (LLWTAVVVLLLLLIIGIIVVI). At 528–540 (WRQPQSSTPLHFK) the chain is on the cytoplasmic side. Residues 541-561 (VPALPLLPLMSIFVNIYLMMQ) traverse the membrane as a helical segment. Topologically, residues 562–569 (MTAGTWAR) are extracellular. Residues 570–590 (FGVWMLIGFAIYFGYGIQHSL) form a helical membrane-spanning segment. At 591–619 (EEIKSNQPSRKSRAKTVDLDPGTLYVHSV) the chain is on the cytoplasmic side. At threonine 606 the chain carries Phosphothreonine. The residue at position 618 (serine 618) is a Phosphoserine.

Belongs to the amino acid-polyamine-organocation (APC) superfamily. Cationic amino acid transporter (CAT) (TC 2.A.3.3) family. N-glycosylated. In terms of tissue distribution, highly expressed in thymus, uterus and testis. Detected at lower levels in brain, mammary gland, prostate, salivary gland and fetal spleen. In brain, highest expression in thalamus, hippocampus and amygdala.

It localises to the cell membrane. It catalyses the reaction L-arginine(in) = L-arginine(out). It carries out the reaction L-lysine(in) = L-lysine(out). The enzyme catalyses L-ornithine(in) = L-ornithine(out). In terms of biological role, uniporter that mediates the uptake of cationic L-amino acids such as L-arginine, L-lysine and L-ornithine. The transport is sodium ions- and pH-independent, moderately trans-stimulated and is mediated by passive diffusion. This is Cationic amino acid transporter 3 from Homo sapiens (Human).